The sequence spans 395 residues: Ribonuclease D (395 aa).

Residues L14–E181 enclose the 3'-5' exonuclease domain. In terms of domain architecture, HRDC spans N219–D300.

This sequence belongs to the RNase D family. A divalent metal cation serves as cofactor.

It is found in the cytoplasm. It catalyses the reaction Exonucleolytic cleavage that removes extra residues from the 3'-terminus of tRNA to produce 5'-mononucleotides.. In terms of biological role, exonuclease involved in the 3' processing of various precursor tRNAs. Initiates hydrolysis at the 3'-terminus of an RNA molecule and releases 5'-mononucleotides. In Granulibacter bethesdensis (strain ATCC BAA-1260 / CGDNIH1), this protein is Ribonuclease D.